The sequence spans 120 residues: Large ribosomal subunit protein uL18 (120 aa).

This sequence belongs to the universal ribosomal protein uL18 family. Part of the 50S ribosomal subunit; part of the 5S rRNA/L5/L18/L25 subcomplex. Contacts the 5S and 23S rRNAs.

This is one of the proteins that bind and probably mediate the attachment of the 5S RNA into the large ribosomal subunit, where it forms part of the central protuberance. The polypeptide is Large ribosomal subunit protein uL18 (Geobacillus kaustophilus (strain HTA426)).